The chain runs to 485 residues: Protein nucleotidyltransferase YdiU (485 aa).

ATP is bound by residues G90, G92, R93, K113, D125, G126, R176, and R183. The Proton acceptor role is filled by D252. N253 and D262 together coordinate Mg(2+). D262 provides a ligand contact to ATP.

The protein belongs to the SELO family. It depends on Mg(2+) as a cofactor. Mn(2+) is required as a cofactor.

It carries out the reaction L-seryl-[protein] + ATP = 3-O-(5'-adenylyl)-L-seryl-[protein] + diphosphate. It catalyses the reaction L-threonyl-[protein] + ATP = 3-O-(5'-adenylyl)-L-threonyl-[protein] + diphosphate. The enzyme catalyses L-tyrosyl-[protein] + ATP = O-(5'-adenylyl)-L-tyrosyl-[protein] + diphosphate. The catalysed reaction is L-histidyl-[protein] + UTP = N(tele)-(5'-uridylyl)-L-histidyl-[protein] + diphosphate. It carries out the reaction L-seryl-[protein] + UTP = O-(5'-uridylyl)-L-seryl-[protein] + diphosphate. It catalyses the reaction L-tyrosyl-[protein] + UTP = O-(5'-uridylyl)-L-tyrosyl-[protein] + diphosphate. Functionally, nucleotidyltransferase involved in the post-translational modification of proteins. It can catalyze the addition of adenosine monophosphate (AMP) or uridine monophosphate (UMP) to a protein, resulting in modifications known as AMPylation and UMPylation. In Aliivibrio salmonicida (strain LFI1238) (Vibrio salmonicida (strain LFI1238)), this protein is Protein nucleotidyltransferase YdiU.